We begin with the raw amino-acid sequence, 505 residues long: Glycerol kinase (505 aa).

Thr14 contributes to the ADP binding site. ATP-binding residues include Thr14, Thr15, and Ser16. A sn-glycerol 3-phosphate-binding site is contributed by Thr14. Arg18 is a binding site for ADP. The sn-glycerol 3-phosphate site is built by Arg84, Glu85, Tyr136, and Asp246. The glycerol site is built by Arg84, Glu85, Tyr136, Asp246, and Gln247. 2 residues coordinate ADP: Thr268 and Gly311. Residues Thr268, Gly311, Gln315, and Gly412 each contribute to the ATP site. ADP contacts are provided by Gly412 and Asn416.

The protein belongs to the FGGY kinase family.

It catalyses the reaction glycerol + ATP = sn-glycerol 3-phosphate + ADP + H(+). It participates in polyol metabolism; glycerol degradation via glycerol kinase pathway; sn-glycerol 3-phosphate from glycerol: step 1/1. Inhibited by fructose 1,6-bisphosphate (FBP). In terms of biological role, key enzyme in the regulation of glycerol uptake and metabolism. Catalyzes the phosphorylation of glycerol to yield sn-glycerol 3-phosphate. The sequence is that of Glycerol kinase from Vibrio vulnificus (strain CMCP6).